The chain runs to 182 residues: Shikimate kinase (182 aa).

14–19 (GAGKTT) serves as a coordination point for ATP. Thr-18 is a Mg(2+) binding site. Asp-36, Arg-60, and Gly-84 together coordinate substrate. Arg-122 is a binding site for ATP. Substrate is bound at residue Arg-141.

Belongs to the shikimate kinase family. In terms of assembly, monomer. The cofactor is Mg(2+).

It is found in the cytoplasm. The enzyme catalyses shikimate + ATP = 3-phosphoshikimate + ADP + H(+). It participates in metabolic intermediate biosynthesis; chorismate biosynthesis; chorismate from D-erythrose 4-phosphate and phosphoenolpyruvate: step 5/7. Catalyzes the specific phosphorylation of the 3-hydroxyl group of shikimic acid using ATP as a cosubstrate. The protein is Shikimate kinase of Marinomonas sp. (strain MWYL1).